Reading from the N-terminus, the 478-residue chain is Probable serine carboxypeptidase CPVL (478 aa).

The first 22 residues, 1 to 22 (MVRAQWKVIILLILLMVIPSDG), serve as a signal peptide directing secretion. N-linked (GlcNAc...) asparagine glycosylation is found at Asn83 and Asn134. Ser206 is a catalytic residue. Residues Asn309 and Asn350 are each glycosylated (N-linked (GlcNAc...) asparagine). Residues Asp390 and His450 contribute to the active site.

The protein belongs to the peptidase S10 family.

In terms of biological role, may be involved in the digestion of phagocytosed particles in the lysosome, participation in an inflammatory protease cascade, and trimming of peptides for antigen presentation. In Rattus norvegicus (Rat), this protein is Probable serine carboxypeptidase CPVL (CPVL).